Here is a 282-residue protein sequence, read N- to C-terminus: Glutamyl endopeptidase (282 aa).

Residues 1–27 (MKKRFLSICTMTIAALATTTMVNTSYA) form the signal peptide. Positions 28 to 66 (KTDTESHNHSSLGTENKNVLDINSSSHNIKPSQNKSYPS) are excised as a propeptide. Catalysis depends on charge relay system residues His-117, Asp-159, and Ser-235.

The protein belongs to the peptidase S1B family. In terms of assembly, monomer.

The protein resides in the secreted. The enzyme catalyses Preferential cleavage: Glu-|-Xaa, Asp-|-Xaa.. Its activity is regulated as follows. Inhibited by diisopropyl fluorophosphate. In terms of biological role, exhibits a significant hydrolytic activity for the carbonyl side of glutamic acid. Shows activity toward human fibronectin and type 1 collagen. This chain is Glutamyl endopeptidase (gseA), found in Staphylococcus epidermidis.